The sequence spans 109 residues: Iron-sulfur cluster assembly protein CyaY (109 aa).

It belongs to the frataxin family.

Involved in iron-sulfur (Fe-S) cluster assembly. May act as a regulator of Fe-S biogenesis. This chain is Iron-sulfur cluster assembly protein CyaY, found in Shewanella sp. (strain ANA-3).